The primary structure comprises 417 residues: UDP-N-acetylglucosamine 1-carboxyvinyltransferase (417 aa).

A phosphoenolpyruvate-binding site is contributed by 22–23 (KN). Arg-91 lines the UDP-N-acetyl-alpha-D-glucosamine pocket. Catalysis depends on Cys-115, which acts as the Proton donor. The residue at position 115 (Cys-115) is a 2-(S-cysteinyl)pyruvic acid O-phosphothioketal. UDP-N-acetyl-alpha-D-glucosamine is bound by residues 120–124 (RPVDL), Asp-304, and Ile-326.

Belongs to the EPSP synthase family. MurA subfamily.

It is found in the cytoplasm. The catalysed reaction is phosphoenolpyruvate + UDP-N-acetyl-alpha-D-glucosamine = UDP-N-acetyl-3-O-(1-carboxyvinyl)-alpha-D-glucosamine + phosphate. It participates in cell wall biogenesis; peptidoglycan biosynthesis. Functionally, cell wall formation. Adds enolpyruvyl to UDP-N-acetylglucosamine. In Nitratidesulfovibrio vulgaris (strain ATCC 29579 / DSM 644 / CCUG 34227 / NCIMB 8303 / VKM B-1760 / Hildenborough) (Desulfovibrio vulgaris), this protein is UDP-N-acetylglucosamine 1-carboxyvinyltransferase.